The sequence spans 106 residues: Large ribosomal subunit protein uL24 (106 aa).

This sequence belongs to the universal ribosomal protein uL24 family. As to quaternary structure, part of the 50S ribosomal subunit.

One of two assembly initiator proteins, it binds directly to the 5'-end of the 23S rRNA, where it nucleates assembly of the 50S subunit. In terms of biological role, one of the proteins that surrounds the polypeptide exit tunnel on the outside of the subunit. This Verminephrobacter eiseniae (strain EF01-2) protein is Large ribosomal subunit protein uL24.